Reading from the N-terminus, the 64-residue chain is Large ribosomal subunit protein bL35 (64 aa).

Polar residues predominate over residues 1 to 10; sequence MPKMKTNSAA. A disordered region spans residues 1 to 64; it reads MPKMKTNSAA…SKNMKKLLGR (64 aa).

The protein belongs to the bacterial ribosomal protein bL35 family.

The polypeptide is Large ribosomal subunit protein bL35 (Bifidobacterium adolescentis (strain ATCC 15703 / DSM 20083 / NCTC 11814 / E194a)).